The primary structure comprises 208 residues: FMN-dependent NADH:quinone oxidoreductase 3 (208 aa).

It belongs to the azoreductase type 1 family. Homodimer. The cofactor is FMN.

It catalyses the reaction 2 a quinone + NADH + H(+) = 2 a 1,4-benzosemiquinone + NAD(+). The catalysed reaction is N,N-dimethyl-1,4-phenylenediamine + anthranilate + 2 NAD(+) = 2-(4-dimethylaminophenyl)diazenylbenzoate + 2 NADH + 2 H(+). In terms of biological role, quinone reductase that provides resistance to thiol-specific stress caused by electrophilic quinones. Its function is as follows. Also exhibits azoreductase activity. Catalyzes the reductive cleavage of the azo bond in aromatic azo compounds to the corresponding amines. The polypeptide is FMN-dependent NADH:quinone oxidoreductase 3 (Bacillus cereus (strain ATCC 14579 / DSM 31 / CCUG 7414 / JCM 2152 / NBRC 15305 / NCIMB 9373 / NCTC 2599 / NRRL B-3711)).